The chain runs to 664 residues: DNA ligase (664 aa).

NAD(+)-binding positions include 31 to 35 (DYEFD), 80 to 81 (SL), and glutamate 110. Lysine 112 functions as the N6-AMP-lysine intermediate in the catalytic mechanism. Positions 133 and 169 each coordinate NAD(+). The BRCT 1 domain occupies 237-257 (LEKARKWGFKVPAESELKDSI). Residues lysine 284 and lysine 308 each coordinate NAD(+). Cysteine 402, cysteine 405, cysteine 420, and cysteine 426 together coordinate Zn(2+). Positions 586 to 664 (NQTNILEGNT…SEEDFLKMLE (79 aa)) constitute a BRCT 2 domain.

Belongs to the NAD-dependent DNA ligase family. LigA subfamily. The cofactor is Mg(2+). Mn(2+) serves as cofactor.

The enzyme catalyses NAD(+) + (deoxyribonucleotide)n-3'-hydroxyl + 5'-phospho-(deoxyribonucleotide)m = (deoxyribonucleotide)n+m + AMP + beta-nicotinamide D-nucleotide.. Functionally, DNA ligase that catalyzes the formation of phosphodiester linkages between 5'-phosphoryl and 3'-hydroxyl groups in double-stranded DNA using NAD as a coenzyme and as the energy source for the reaction. It is essential for DNA replication and repair of damaged DNA. The polypeptide is DNA ligase (Christiangramia forsetii (strain DSM 17595 / CGMCC 1.15422 / KT0803) (Gramella forsetii)).